Consider the following 384-residue polypeptide: D-galactosamine-6-phosphate deaminase AgaS (384 aa).

SIS domains follow at residues 45–197 (LEPL…SQTF) and 215–364 (SEGV…PDTP).

It belongs to the SIS family. AgaS subfamily.

It carries out the reaction D-galactosamine 6-phosphate + H2O = D-tagatopyranose 1-phosphate + NH4(+). Its function is as follows. Catalyzes the isomerization-deamination of galactosamine 6-phosphate to form tagatofuranose 6-phosphate and ammonium ion. In Escherichia coli O157:H7, this protein is D-galactosamine-6-phosphate deaminase AgaS.